We begin with the raw amino-acid sequence, 704 residues long: Polyribonucleotide nucleotidyltransferase (704 aa).

2 residues coordinate Mg(2+): aspartate 488 and aspartate 494. Residues proline 555–isoleucine 614 form the KH domain. The S1 motif domain maps to glycine 624–lysine 692.

The protein belongs to the polyribonucleotide nucleotidyltransferase family. As to quaternary structure, component of the RNA degradosome, which is a multiprotein complex involved in RNA processing and mRNA degradation. Requires Mg(2+) as cofactor.

The protein localises to the cytoplasm. The catalysed reaction is RNA(n+1) + phosphate = RNA(n) + a ribonucleoside 5'-diphosphate. Involved in mRNA degradation. Catalyzes the phosphorolysis of single-stranded polyribonucleotides processively in the 3'- to 5'-direction. The protein is Polyribonucleotide nucleotidyltransferase of Shewanella sediminis (strain HAW-EB3).